Consider the following 150-residue polypeptide: Ubiquitin-conjugating enzyme E2 3 (150 aa).

One can recognise a UBC core domain in the interval 4–150 (PAKKRLMWDF…VIEIVEQSYV (147 aa)). Catalysis depends on Cys88, which acts as the Glycyl thioester intermediate.

The protein belongs to the ubiquitin-conjugating enzyme family. In terms of tissue distribution, expressed in all tissues examined. Lower levels found in leaves.

It carries out the reaction S-ubiquitinyl-[E1 ubiquitin-activating enzyme]-L-cysteine + [E2 ubiquitin-conjugating enzyme]-L-cysteine = [E1 ubiquitin-activating enzyme]-L-cysteine + S-ubiquitinyl-[E2 ubiquitin-conjugating enzyme]-L-cysteine.. Its pathway is protein modification; protein ubiquitination. In terms of biological role, accepts the ubiquitin from the E1 complex and catalyzes its covalent attachment to other proteins. The polypeptide is Ubiquitin-conjugating enzyme E2 3 (UBC3) (Arabidopsis thaliana (Mouse-ear cress)).